Reading from the N-terminus, the 134-residue chain is MSESLKILNNIRTLRAQARETSLETLEEMLEKLEVVVNERREEEQAMQAEIEERQQKLQKYRELLIADGIDPTDLLEAAGASKTGRAKRAARPAKYSYVDDNGETKTWTGQGRTLAVIKRAIEEEGKSLEDFLI.

The DNA-binding element occupies 111 to 116 (QGRTLA).

Belongs to the histone-like protein H-NS family. In terms of assembly, homodimer that oligomerizes on DNA into higher-order complexes that form bridges between disparate regions of DNA compacting it. Interacts with YmoA and other similar proteins.

It is found in the cytoplasm. The protein localises to the nucleoid. Functionally, a DNA-binding protein implicated in transcriptional repression and chromosome organization and compaction. Binds nucleation sites in AT-rich DNA and bridges them, forming higher-order nucleoprotein complexes and condensing the chromosome. As many horizontally transferred genes are AT-rich, it plays a central role in silencing foreign genes. A subset of genes are repressed by H-NS in association with other proteins. The sequence is that of DNA-binding protein H-NS (hns) from Proteus vulgaris.